The primary structure comprises 156 residues: Small ribosomal subunit protein uS7c (156 aa).

The protein belongs to the universal ribosomal protein uS7 family. As to quaternary structure, part of the 30S ribosomal subunit.

The protein localises to the plastid. It localises to the chloroplast. Its function is as follows. One of the primary rRNA binding proteins, it binds directly to 16S rRNA where it nucleates assembly of the head domain of the 30S subunit. The chain is Small ribosomal subunit protein uS7c (rps7) from Thalassiosira pseudonana (Marine diatom).